The chain runs to 321 residues: MSKAAAPQIELASADPSIAQEMTRWLSHLGAERRLSPKTLEAYGRDLRQCLDFLCNHWGERVTLKRFAALEATDVRAFMAMRRADDIAGRSLMRALAGLRSFGRFLEREGKGKVGALSAIRAPKVAKSLPKPLPMASAKRLADADERAGEERETWILARDAAVMALLYGSGLRISEALGLKRREVPKPGEGDVLVVTGKGNKTRMVPVLQNVLALVQEYVSMCPYPLPAEGPIFVGARGGPLSPRIIQLAMERLRGALGLPDSATPHALRHSFATHLLSRGGDLRAIQELLGHSSLSTTQIYTGIDSERLLEVYASAHPRR.

The Core-binding (CB) domain maps to 16–107 (PSIAQEMTRW…GLRSFGRFLE (92 aa)). The 188-residue stretch at 128–315 (SLPKPLPMAS…DSERLLEVYA (188 aa)) folds into the Tyr recombinase domain. Residues Arg-173, Lys-199, His-267, Arg-270, and His-293 contribute to the active site. The active-site O-(3'-phospho-DNA)-tyrosine intermediate is the Tyr-302.

The protein belongs to the 'phage' integrase family. XerC subfamily. In terms of assembly, forms a cyclic heterotetrameric complex composed of two molecules of XerC and two molecules of XerD.

It is found in the cytoplasm. Functionally, site-specific tyrosine recombinase, which acts by catalyzing the cutting and rejoining of the recombining DNA molecules. The XerC-XerD complex is essential to convert dimers of the bacterial chromosome into monomers to permit their segregation at cell division. It also contributes to the segregational stability of plasmids. The protein is Tyrosine recombinase XerC of Bradyrhizobium diazoefficiens (strain JCM 10833 / BCRC 13528 / IAM 13628 / NBRC 14792 / USDA 110).